A 700-amino-acid polypeptide reads, in one-letter code: Putative glutamine-dependent NAD(+) synthetase (700 aa).

The CN hydrolase domain maps to 5-275 (VTIASCQLNQ…VEVISATVDV (271 aa)). The Proton acceptor; for glutaminase activity role is filled by glutamate 45. Lysine 114 functions as the For glutaminase activity in the catalytic mechanism. Catalysis depends on cysteine 175, which acts as the Nucleophile; for glutaminase activity. Residues 327–700 (IPLPEEEITF…ASKFEQHQRK (374 aa)) form a ligase region. 357-364 (PLSGGLDS) is an ATP binding site. Serine 359 is a catalytic residue.

This sequence in the C-terminal section; belongs to the NAD synthetase family.

The catalysed reaction is deamido-NAD(+) + L-glutamine + ATP + H2O = L-glutamate + AMP + diphosphate + NAD(+) + H(+). The protein operates within cofactor biosynthesis; NAD(+) biosynthesis; NAD(+) from deamido-NAD(+) (L-Gln route): step 1/1. This chain is Putative glutamine-dependent NAD(+) synthetase, found in Schizosaccharomyces pombe (strain 972 / ATCC 24843) (Fission yeast).